Reading from the N-terminus, the 440-residue chain is Xaa-Pro dipeptidase (440 aa).

Residues D244, D255, H336, E381, and E420 each contribute to the Mn(2+) site.

It belongs to the peptidase M24B family. Mn(2+) is required as a cofactor. In terms of processing, the N-terminus is blocked.

The enzyme catalyses Xaa-L-Pro dipeptide + H2O = an L-alpha-amino acid + L-proline. It catalyses the reaction diisopropyl fluorophosphate + H2O = diisopropyl phosphate + fluoride + 2 H(+). Functionally, splits dipeptides with a prolyl or hydroxyprolyl residue in the C-terminal position and a nonpolar amino acid at the N-terminal position. Also catalyzes the hydrolysis of toxic organophosphorus cholinesterase-inhibiting compounds including nerve gases such as diisopropylfluorophosphate (DFP), O-isopropyl methylphosphonofluoridate (sarin), O-pinacolyl methylphosphonofluoridate (soman), and O-cyclohexyl methylphosphonofluoridate. This is Xaa-Pro dipeptidase (pepQ) from Pseudoalteromonas haloplanktis (Alteromonas haloplanktis).